The primary structure comprises 167 residues: MADEATRRVVSEIPVLKTNAGPRDRELWVQRLKEEYQSLIRYVENNKNADNDWFRLESNKEGTRWFGKCWYIHDFLKYEFDIEFEIPITYPTTAPEIAVPELDGKTAKMYRGGKICLTDHFKPLWARNVPKFGLAHLMALGLGPWLAVEVPDLIQKGVIQHKEKCNQ.

The active-site Glycyl thioester intermediate is cysteine 116. Lysine 122 participates in a covalent cross-link: Glycyl lysine isopeptide (Lys-Gly) (interchain with G-Cter in UFM1).

Belongs to the ubiquitin-conjugating enzyme family. UFC1 subfamily. In terms of assembly, interacts with UBA5 (via C-terminus). Interacts with UFL1. Interacts with UFM1. Interacts with KIRREL3. Post-translationally, ufmylated at Lys-122. Deufmylated by UFSP1.

Its function is as follows. E2-like enzyme which specifically catalyzes the second step in ufmylation. Accepts the ubiquitin-like modifier UFM1 from the E1 enzyme UBA5 and forms an intermediate with UFM1 via a thioester linkage. Ufmylation is involved in various processes, such as ribosome recycling, response to DNA damage, interferon response or reticulophagy (also called ER-phagy). The protein is Ubiquitin-fold modifier-conjugating enzyme 1 of Rattus norvegicus (Rat).